We begin with the raw amino-acid sequence, 342 residues long: Dihydroorotate dehydrogenase (quinone) (342 aa).

Residues 61 to 65 (AGLDK) and threonine 85 each bind FMN. Lysine 65 contacts substrate. Substrate is bound at residue 110–114 (NRMGF). The FMN site is built by asparagine 138 and asparagine 171. A substrate-binding site is contributed by asparagine 171. The active-site Nucleophile is the serine 174. Position 176 (asparagine 176) interacts with substrate. Residues lysine 216 and threonine 244 each contribute to the FMN site. 245-246 (NT) provides a ligand contact to substrate. FMN is bound by residues glycine 267, glycine 296, and 317–318 (YS).

This sequence belongs to the dihydroorotate dehydrogenase family. Type 2 subfamily. As to quaternary structure, monomer. FMN is required as a cofactor.

Its subcellular location is the cell membrane. It catalyses the reaction (S)-dihydroorotate + a quinone = orotate + a quinol. Its pathway is pyrimidine metabolism; UMP biosynthesis via de novo pathway; orotate from (S)-dihydroorotate (quinone route): step 1/1. Its function is as follows. Catalyzes the conversion of dihydroorotate to orotate with quinone as electron acceptor. This Cellvibrio japonicus (strain Ueda107) (Pseudomonas fluorescens subsp. cellulosa) protein is Dihydroorotate dehydrogenase (quinone).